The primary structure comprises 575 residues: Proline--tRNA ligase (575 aa).

Belongs to the class-II aminoacyl-tRNA synthetase family. ProS type 1 subfamily. As to quaternary structure, homodimer.

It localises to the cytoplasm. It carries out the reaction tRNA(Pro) + L-proline + ATP = L-prolyl-tRNA(Pro) + AMP + diphosphate. Functionally, catalyzes the attachment of proline to tRNA(Pro) in a two-step reaction: proline is first activated by ATP to form Pro-AMP and then transferred to the acceptor end of tRNA(Pro). As ProRS can inadvertently accommodate and process non-cognate amino acids such as alanine and cysteine, to avoid such errors it has two additional distinct editing activities against alanine. One activity is designated as 'pretransfer' editing and involves the tRNA(Pro)-independent hydrolysis of activated Ala-AMP. The other activity is designated 'posttransfer' editing and involves deacylation of mischarged Ala-tRNA(Pro). The misacylated Cys-tRNA(Pro) is not edited by ProRS. The protein is Proline--tRNA ligase of Pseudothermotoga lettingae (strain ATCC BAA-301 / DSM 14385 / NBRC 107922 / TMO) (Thermotoga lettingae).